Reading from the N-terminus, the 289-residue chain is Borealin (289 aa).

Residues 1–58 (MAPKKRSSRGTRTNTLRSRKLASFLKDFDREVQVRTKQIESDRQTLLKEVENLYNIEI) are required for interaction with INCENP. The interval 1–88 (MAPKKRSSRG…NKQALEEAAK (88 aa)) is required for centromere localization. A required for interaction with SENP3 region spans residues 1-150 (MAPKKRSSRG…KKSHKNLRSA (150 aa)). A required to form a minimal CPC core complex that localizes to the central spindle and midbody and properly executes the role of the CPC during cytokinesis region spans residues 10–109 (GTRTNTLRSR…TAEAIQTPLK (100 aa)). Residues 20–78 (KLASFLKDFDREVQVRTKQIESDRQTLLKEVENLYNIEILRLPKALQGMKWLDYFALGG) are required for interaction with INCENP and BIRC5. Arg91 is modified (citrulline). At Thr94 the chain carries Phosphothreonine; by TTK. Thr106 is modified (phosphothreonine). Ser110 carries the post-translational modification Phosphoserine. The tract at residues 122–173 (SIKEEEEEEEEGGGGGGRTKKSHKNLRSAKVKRCLPSKKRTQSIQGRGRSKR) is disordered. The span at 123–133 (IKEEEEEEEEG) shows a compositional bias: acidic residues. Positions 139 to 162 (RTKKSHKNLRSAKVKRCLPSKKRT) are enriched in basic residues. Lys145 is covalently cross-linked (Glycyl lysine isopeptide (Lys-Gly) (interchain with G-Cter in SUMO2)). A Phosphoserine modification is found at Ser175. Phosphothreonine occurs at positions 198 and 213. Residues Ser228, Ser233, Ser247, and Ser253 each carry the phosphoserine modification.

Belongs to the borealin family. As to quaternary structure, may form homooligomers and homodimers. Component of the chromosomal passenger complex (CPC) composed of at least BIRC5/survivin, CDCA8/borealin, INCENP, AURKB or AURKC; in the complex forms a triple-helix bundle-based subcomplex with INCENP and BIRC5. Interacts with SENP3, UBE2I and RANBP2. Interacts (phosphorylated) with SGO1 and SGO2A; the association is dependent on CDK1. Phosphorylated by TTK, essentially at Thr-94. Phosphorylation (probably by CDK1) promotes targeting of the CPC to centromeric DNA. Post-translationally, sumoylated by UBE2I and RANBP2. Desumoylated by SENP3 through the removal of SUMO2 and SUMO3. In terms of processing, citrullinated by PADI4.

Its subcellular location is the nucleus. The protein resides in the nucleolus. It localises to the cytoplasm. It is found in the chromosome. The protein localises to the centromere. Its subcellular location is the cytoskeleton. The protein resides in the spindle. Its function is as follows. Component of the chromosomal passenger complex (CPC), a complex that acts as a key regulator of mitosis. The CPC complex has essential functions at the centromere in ensuring correct chromosome alignment and segregation and is required for chromatin-induced microtubule stabilization and spindle assembly. In the complex, it may be required to direct the CPC to centromeric DNA. Major effector of the TTK kinase in the control of attachment-error-correction and chromosome alignment. The polypeptide is Borealin (Cdca8) (Mus musculus (Mouse)).